The primary structure comprises 153 residues: Protein Smg homolog (153 aa).

The protein belongs to the Smg family.

The protein is Protein Smg homolog of Neisseria meningitidis serogroup B (strain ATCC BAA-335 / MC58).